The sequence spans 283 residues: Cytosolic Fe-S cluster assembly factor CFD1 (283 aa).

26-33 is a binding site for ATP; that stretch reads GKGGVGKS. Residues Cys-202 and Cys-205 each contribute to the [4Fe-4S] cluster site.

The protein belongs to the Mrp/NBP35 ATP-binding proteins family. NUBP2/CFD1 subfamily. As to quaternary structure, heterotetramer of 2 NBP35 and 2 CFD1 chains. The cofactor is [4Fe-4S] cluster.

It localises to the cytoplasm. In terms of biological role, component of the cytosolic iron-sulfur (Fe/S) protein assembly (CIA) machinery. Required for maturation of extramitochondrial Fe-S proteins. The NBP35-CFD1 heterotetramer forms a Fe-S scaffold complex, mediating the de novo assembly of an Fe-S cluster and its transfer to target apoproteins. Required for biogenesis and export of both ribosomal subunits, which may reflect a role in assembly of the Fe/S clusters in RLI1, a protein which performs rRNA processing and ribosome export. The sequence is that of Cytosolic Fe-S cluster assembly factor CFD1 from Kluyveromyces lactis (strain ATCC 8585 / CBS 2359 / DSM 70799 / NBRC 1267 / NRRL Y-1140 / WM37) (Yeast).